The primary structure comprises 216 residues: Small ribosomal subunit protein uS5 (216 aa).

Residues 1-55 (MDKKLENQKDLLNQDPKVELNSQSVAKNPLNSREVKPIQRRRPLRKNARDKNSKP) form a disordered region. Positions 20–31 (LNSQSVAKNPLN) are enriched in polar residues. In terms of domain architecture, S5 DRBM spans 57–120 (FEERVIAIHR…KDAQNRLVSV (64 aa)).

The protein belongs to the universal ribosomal protein uS5 family. Part of the 30S ribosomal subunit. Contacts proteins S4 and S8.

Functionally, with S4 and S12 plays an important role in translational accuracy. Located at the back of the 30S subunit body where it stabilizes the conformation of the head with respect to the body. This Mesomycoplasma hyopneumoniae (strain 7448) (Mycoplasma hyopneumoniae) protein is Small ribosomal subunit protein uS5.